The sequence spans 305 residues: Taste receptor type 2 member 136 (305 aa).

Residues 1 to 9 are Extracellular-facing; the sequence is MMSFLVSIA. Residues 10 to 30 traverse the membrane as a helical segment; it reads SIAMLVKIVLGTFANVFIVLV. At 31 to 46 the chain is on the cytoplasmic side; the sequence is NFTDCIKKRKFLLADR. A helical transmembrane segment spans residues 47-67; sequence ILTVLAIFRFDLLWIILMNWS. The Extracellular segment spans residues 68 to 69; the sequence is SS. The chain crosses the membrane as a helical span at residues 70–90; that stretch reads VFHVGLYFQVRFCICVVWIVT. The Cytoplasmic segment spans residues 91–99; the sequence is NHFNTWLAN. Residues 100–120 form a helical membrane-spanning segment; it reads ILSILYLLKIDNFSNLIFLGL. Over 121-127 the chain is Extracellular; that stretch reads KGKIKCP. Residues 128–148 traverse the membrane as a helical segment; the sequence is YIVLLPCFVLLFPNLIMVTIC. The Cytoplasmic portion of the chain corresponds to 149–176; the sequence is ETTQANGHQGNLTGKTKLTYFTNLIAMT. A helical membrane pass occupies residues 177–197; that stretch reads FTLGSLVPFTTFMICFLLLIC. The Extracellular portion of the chain corresponds to 198 to 223; it reads SLCKHLRTMRLYGKGSQGPSASTHIK. Residues 224–244 form a helical membrane-spanning segment; it reads VLQVLISFLLLFSMFILLLII. The Cytoplasmic segment spans residues 245–305; it reads SDYNYTKSLE…ARFWLKEKKP (61 aa).

It belongs to the G-protein coupled receptor T2R family.

It is found in the membrane. Putative taste receptor which may play a role in the perception of bitterness. This is Taste receptor type 2 member 136 (Tas2r136) from Mus musculus (Mouse).